Here is a 124-residue protein sequence, read N- to C-terminus: MAENSRYVRLDANGTEGIEEPNPSRRIRNKSILEKMLNSNDAESQQVAKRRRVEERPASSSNPDYVCINDVSINSPVTPIPASPSPAALDFPTISRRISQSLEKSRECVWISCGHRNFSRESFN.

Residues 1-65 are disordered; the sequence is MAENSRYVRL…RPASSSNPDY (65 aa). Over residues 37–47 the composition is skewed to polar residues; it reads LNSNDAESQQV.

This is an uncharacterized protein from Microplitis demolitor (Parasitoid wasp).